The chain runs to 220 residues: Probable GTP-binding protein EngB (220 aa).

One can recognise an EngB-type G domain in the interval 23-199 (SVREVAFAGR…ERVLASWLDI (177 aa)). Residues Ser38 and Thr60 each contribute to the Mg(2+) site.

This sequence belongs to the TRAFAC class TrmE-Era-EngA-EngB-Septin-like GTPase superfamily. EngB GTPase family. The cofactor is Mg(2+).

Its function is as follows. Necessary for normal cell division and for the maintenance of normal septation. The protein is Probable GTP-binding protein EngB of Dechloromonas aromatica (strain RCB).